The sequence spans 242 residues: Ubiquinone biosynthesis O-methyltransferase (242 aa).

S-adenosyl-L-methionine-binding residues include arginine 44, glycine 64, aspartate 85, and methionine 129.

This sequence belongs to the methyltransferase superfamily. UbiG/COQ3 family.

It catalyses the reaction a 3-demethylubiquinol + S-adenosyl-L-methionine = a ubiquinol + S-adenosyl-L-homocysteine + H(+). The catalysed reaction is a 3-(all-trans-polyprenyl)benzene-1,2-diol + S-adenosyl-L-methionine = a 2-methoxy-6-(all-trans-polyprenyl)phenol + S-adenosyl-L-homocysteine + H(+). It participates in cofactor biosynthesis; ubiquinone biosynthesis. In terms of biological role, O-methyltransferase that catalyzes the 2 O-methylation steps in the ubiquinone biosynthetic pathway. The protein is Ubiquinone biosynthesis O-methyltransferase of Salmonella paratyphi A (strain ATCC 9150 / SARB42).